Consider the following 46-residue polypeptide: MTTLALVLAKLPEAYAPFAPIVDVLPVIPVFFILLAFVWQAAVSFR.

A propeptide spanning residues 1–9 (MTTLALVLA) is cleaved from the precursor. Residues 18–38 (FAPIVDVLPVIPVFFILLAFV) form a helical membrane-spanning segment.

Belongs to the PsbK family. PSII is composed of 1 copy each of membrane proteins PsbA, PsbB, PsbC, PsbD, PsbE, PsbF, PsbH, PsbI, PsbJ, PsbK, PsbL, PsbM, PsbT, PsbX, PsbY, PsbZ, Psb30/Ycf12, at least 3 peripheral proteins of the oxygen-evolving complex and a large number of cofactors. It forms dimeric complexes. This protein is tightly associated with CP43 (psbC), one of the core proteins.

Its subcellular location is the plastid. The protein localises to the chloroplast thylakoid membrane. Its function is as follows. One of the components of the core complex of photosystem II (PSII). PSII is a light-driven water:plastoquinone oxidoreductase that uses light energy to abstract electrons from H(2)O, generating O(2) and a proton gradient subsequently used for ATP formation. It consists of a core antenna complex that captures photons, and an electron transfer chain that converts photonic excitation into a charge separation. Required for assembly and/or stability of PSII. This is Photosystem II reaction center protein K from Chlamydomonas reinhardtii (Chlamydomonas smithii).